Here is a 681-residue protein sequence, read N- to C-terminus: DNA ligase (681 aa).

NAD(+) is bound by residues 42–46 (DAEYD), 91–92 (SL), and Glu120. The active-site N6-AMP-lysine intermediate is Lys122. Residues Arg143, Glu180, Lys302, and Lys326 each contribute to the NAD(+) site. Residues Cys420, Cys423, Cys438, and Cys444 each contribute to the Zn(2+) site. In terms of domain architecture, BRCT spans 603–681 (ADAQPLLGQT…EAGLIELIGL (79 aa)).

Belongs to the NAD-dependent DNA ligase family. LigA subfamily. The cofactor is Mg(2+). Requires Mn(2+) as cofactor.

The catalysed reaction is NAD(+) + (deoxyribonucleotide)n-3'-hydroxyl + 5'-phospho-(deoxyribonucleotide)m = (deoxyribonucleotide)n+m + AMP + beta-nicotinamide D-nucleotide.. DNA ligase that catalyzes the formation of phosphodiester linkages between 5'-phosphoryl and 3'-hydroxyl groups in double-stranded DNA using NAD as a coenzyme and as the energy source for the reaction. It is essential for DNA replication and repair of damaged DNA. The protein is DNA ligase of Shewanella amazonensis (strain ATCC BAA-1098 / SB2B).